The following is a 138-amino-acid chain: Large ribosomal subunit protein bL19 (138 aa).

This sequence belongs to the bacterial ribosomal protein bL19 family.

Its function is as follows. This protein is located at the 30S-50S ribosomal subunit interface and may play a role in the structure and function of the aminoacyl-tRNA binding site. The protein is Large ribosomal subunit protein bL19 of Rickettsia canadensis (strain McKiel).